We begin with the raw amino-acid sequence, 203 residues long: MAHGPRYRVPFRRRREGKTNYRKRLKLLKSGKPRLVVRKSLNHHIAQIIVYDPKGDRTLVSAHTRELIRDFGWKGHCGNTPSAYLLGLLIGYKAKKAGIEEAILDIGLHPPVRGSSIFAVLKGAIDAGLNVPHSPEIFPEDYRIRGEHIAEYARMLKEQDEDRFRRQFGGYLEKGLDPEKLPEHFEEVKARIIEKFESEGARE.

Belongs to the universal ribosomal protein uL18 family. Part of the 50S ribosomal subunit. Contacts the 5S and 23S rRNAs.

Its function is as follows. This is one of the proteins that bind and probably mediate the attachment of the 5S RNA into the large ribosomal subunit, where it forms part of the central protuberance. This is Large ribosomal subunit protein uL18 from Pyrococcus horikoshii (strain ATCC 700860 / DSM 12428 / JCM 9974 / NBRC 100139 / OT-3).